A 607-amino-acid polypeptide reads, in one-letter code: Frizzled and smoothened-like protein J (607 aa).

A signal peptide spans 1-26 (MVSNKNLLPIIYIFFIILYFGDVAKS). Over 27-247 (QYFPLDKGAT…QWRNIYRLSD (221 aa)) the chain is Extracellular. The FZ domain occupies 32–182 (DKGATCQKYR…LSYTNTCENT (151 aa)). 3 disulfide bridges follow: Cys-37–Cys-108, Cys-50–Cys-101, and Cys-127–Cys-179. 6 N-linked (GlcNAc...) asparagine glycosylation sites follow: Asn-63, Asn-133, Asn-155, Asn-164, Asn-190, and Asn-222. Residues 248 to 268 (VLSILSCILTLFLVITLGIIN) traverse the membrane as a helical segment. Residues 269–276 (PKVSRFDK) are Cytoplasmic-facing. Residues 277–297 (INVMLLSSIFLQAFSGALMTF) traverse the membrane as a helical segment. Asn-298 carries an N-linked (GlcNAc...) asparagine glycan. The Extracellular portion of the chain corresponds to 298–330 (NGTENTLCPEDGRFASYIDRMCVATGFLLHGSS). A helical membrane pass occupies residues 331–351 (LLVVQWWCVLSFEVWFTIFQV). Residues 352-358 (GKKQKDR) are Cytoplasmic-facing. The helical transmembrane segment at 359–379 (FIYYLVASLIIAWIPPIVSIS) threads the bilayer. Topologically, residues 380–401 (KNEYSGGPANPFCWLTTFNYRR) are extracellular. Residues 402–422 (FAFWLPMGIFLCLGGVFLILL) form a helical membrane-spanning segment. Over 423–451 (MREIYVIVSGNVQSTKESRFKVLKMEAKP) the chain is Cytoplasmic. Residues 452–472 (IISLIMYFSCLLYLFIYDQWI) form a helical membrane-spanning segment. Over 473-508 (NNHMHVYTDSIPSYALCLLTSTSTNDCLLKAPDITG) the chain is Extracellular. Residues 509-529 (LGYFIYSIRVFGVYAFIIYGI) form a helical membrane-spanning segment. Residues 530–607 (SKKTLQIWKY…VELDSNSDAL (78 aa)) lie on the Cytoplasmic side of the membrane. Residues 532–537 (KTLQIW) carry the Lys-Thr-X-X-X-Trp motif, mediates interaction with the PDZ domain of Dvl family members motif. Over residues 559–575 (TAKSSNSNNSSTTNNIS) the composition is skewed to low complexity. Residues 559 to 607 (TAKSSNSNNSSTTNNISVKASSNMEYETRQENENGDSQSVELDSNSDAL) are disordered. A compositionally biased stretch (polar residues) spans 593–607 (GDSQSVELDSNSDAL).

The protein belongs to the G-protein coupled receptor Fz/Smo family.

Its subcellular location is the membrane. The chain is Frizzled and smoothened-like protein J (fslJ-1) from Dictyostelium discoideum (Social amoeba).